We begin with the raw amino-acid sequence, 87 residues long: Insulin-related peptide 1 (87 aa).

A signal peptide spans 1–19 (MKSFMVFVLIFACFSCYYA). A propeptide spanning residues 20-44 (QESTNFYCGRTLSRALAVLCYGAES) is cleaved from the precursor. R64 is modified (arginine amide). A propeptide spanning residues 68–87 (GPVDECCEKACSIQELMTYC) is cleaved from the precursor.

This sequence belongs to the insulin family. As to expression, DAGWWIPQHGHHALAGVR-amide: Expressed in corpora cardiaca (CC), corpora allata (CA), antennal lobe (AL) and gnathal ganglion (GNG) (at protein level). Expression in CC and CA detected in most animals, in AL and GNG in few animals (at protein level).

Its subcellular location is the secreted. This is Insulin-related peptide 1 from Agrotis ipsilon (Black cutworm moth).